A 426-amino-acid chain; its full sequence is High affinity 3',5'-cyclic-AMP phosphodiesterase 7A (426 aa).

The PDEase domain maps to 80–402 (LDEDYNGQAK…ASWKGLQRQQ (323 aa)). H156 serves as the catalytic Proton donor. 4 residues coordinate a divalent metal cation: H160, H196, D197, and D306.

It belongs to the cyclic nucleotide phosphodiesterase family. PDE7 subfamily. As to quaternary structure, interacts with CBFA2T3. A divalent metal cation is required as a cofactor.

It is found in the cytoplasm. Its subcellular location is the cytosol. It catalyses the reaction 3',5'-cyclic AMP + H2O = AMP + H(+). It functions in the pathway purine metabolism; 3',5'-cyclic AMP degradation; AMP from 3',5'-cyclic AMP: step 1/1. In terms of biological role, hydrolyzes the second messenger cAMP, which is a key regulator of many important physiological processes. May have a role in muscle signal transduction. The chain is High affinity 3',5'-cyclic-AMP phosphodiesterase 7A (Pde7a) from Rattus norvegicus (Rat).